The sequence spans 455 residues: Chromosomal replication initiator protein DnaA (455 aa).

The interval 1-74 is domain I, interacts with DnaA modulators; sequence MFDIEKFWQH…IQSAYGYAGI (74 aa). Residues 74 to 117 are domain II; the sequence is IEILPVFQINENNDSPERIVTPEPRYAIQLQQEKRAHKQFTKNL. Positions 118–334 are domain III, AAA+ region; it reads KLNEKYTFDN…GALVKVQAYA (217 aa). ATP is bound by residues Gly162, Gly164, Lys165, and Thr166. The segment at 335-455 is domain IV, binds dsDNA; the sequence is TIERADINVN…VFDLKQMIEH (121 aa).

Belongs to the DnaA family. As to quaternary structure, oligomerizes as a right-handed, spiral filament on DNA at oriC.

It localises to the cytoplasm. Its function is as follows. Plays an essential role in the initiation and regulation of chromosomal replication. ATP-DnaA binds to the origin of replication (oriC) to initiate formation of the DNA replication initiation complex once per cell cycle. Binds the DnaA box (a 9 base pair repeat at the origin) and separates the double-stranded (ds)DNA. Forms a right-handed helical filament on oriC DNA; dsDNA binds to the exterior of the filament while single-stranded (ss)DNA is stabiized in the filament's interior. The ATP-DnaA-oriC complex binds and stabilizes one strand of the AT-rich DNA unwinding element (DUE), permitting loading of DNA polymerase. After initiation quickly degrades to an ADP-DnaA complex that is not apt for DNA replication. Binds acidic phospholipids. The sequence is that of Chromosomal replication initiator protein DnaA from Lactobacillus helveticus (strain DPC 4571).